Here is a 357-residue protein sequence, read N- to C-terminus: DNA replication and repair protein RecF (357 aa).

Residue 30 to 37 participates in ATP binding; it reads GANGSGKT.

Belongs to the RecF family.

It is found in the cytoplasm. Functionally, the RecF protein is involved in DNA metabolism; it is required for DNA replication and normal SOS inducibility. RecF binds preferentially to single-stranded, linear DNA. It also seems to bind ATP. The protein is DNA replication and repair protein RecF of Escherichia fergusonii (strain ATCC 35469 / DSM 13698 / CCUG 18766 / IAM 14443 / JCM 21226 / LMG 7866 / NBRC 102419 / NCTC 12128 / CDC 0568-73).